A 344-amino-acid polypeptide reads, in one-letter code: MQETLKQLETEAIAKVEAASSLKEVNDIRVQYLGKKGPITEVLRGMGKLSAEERPKMGALANEVREQIAGAIAEKNEQLEKEEVKKKLASQTIDVTLPANPIKIGARHPLTIVVEDIEDLFIGMGYTVEEGPEVETDYYNFEALNLPKEHPARDMQDSFYITEDTLLRTQTSPVQARTLEKYKGQGPVKIICPGKVYRRDSDDATHSHQFMQIEGLVVDHNISMSDLKGTLETVARKMFGEDREIRLRPSFFPFTEPSVEVDVSCFKCGGKGCSVCKGTGWIEILGAGMVHPNVLKMSGFDPETYQGFAFGMGVERIAMLKYGIDDIRHFYTNDIRFTKQFKQD.

Glu-256 contacts Mg(2+).

It belongs to the class-II aminoacyl-tRNA synthetase family. Phe-tRNA synthetase alpha subunit type 1 subfamily. In terms of assembly, tetramer of two alpha and two beta subunits. Mg(2+) serves as cofactor.

The protein resides in the cytoplasm. The catalysed reaction is tRNA(Phe) + L-phenylalanine + ATP = L-phenylalanyl-tRNA(Phe) + AMP + diphosphate + H(+). The sequence is that of Phenylalanine--tRNA ligase alpha subunit from Bacillus pumilus (strain SAFR-032).